The primary structure comprises 428 residues: Trigger factor (428 aa).

The PPIase FKBP-type domain occupies 163–248 (GDTAVIDFEG…IKEIKVKELP (86 aa)).

It belongs to the FKBP-type PPIase family. Tig subfamily.

It is found in the cytoplasm. It catalyses the reaction [protein]-peptidylproline (omega=180) = [protein]-peptidylproline (omega=0). Functionally, involved in protein export. Acts as a chaperone by maintaining the newly synthesized protein in an open conformation. Functions as a peptidyl-prolyl cis-trans isomerase. In Ruminiclostridium cellulolyticum (strain ATCC 35319 / DSM 5812 / JCM 6584 / H10) (Clostridium cellulolyticum), this protein is Trigger factor.